Consider the following 83-residue polypeptide: Bublin coiled-coil protein (83 aa).

The disordered stretch occupies residues 1–24; that stretch reads MSGPNGDLGMPVEAGAEGEEDGFG. Residues 25-74 are a coiled coil; the sequence is EAEYAAINSMLDQINSCLDHLEEKNDHLHARLQELLESNRQTRLEFQQQL. Phosphoserine is present on Ser82.

This sequence belongs to the UPF0184 (EST00098) family.

The protein resides in the cell junction. Its subcellular location is the cytoplasm. The protein localises to the cytoskeleton. In terms of biological role, essential for intermediate filament organization in intestinal cells, interacts with intermediate filament and regulates intestinal lumen morphology. The chain is Bublin coiled-coil protein from Homo sapiens (Human).